A 219-amino-acid polypeptide reads, in one-letter code: Ras-related protein RABA5d (219 aa).

Serine 2 bears the N-acetylserine mark. 19-26 lines the GTP pocket; it reads GDSAVGKS. An Effector region motif is present at residues 41–49; that stretch reads SKATIGVEF. Residues 67 to 71, 125 to 128, and 155 to 156 each bind GTP; these read DTAGQ, NKCD, and SA. 2 S-geranylgeranyl cysteine lipidation sites follow: cysteine 215 and cysteine 216.

It belongs to the small GTPase superfamily. Rab family.

It is found in the cell membrane. In terms of biological role, intracellular vesicle trafficking and protein transport. The chain is Ras-related protein RABA5d (RABA5D) from Arabidopsis thaliana (Mouse-ear cress).